The following is a 192-amino-acid chain: uncharacterized protein (192 aa).

The tract at residues 71–100 is disordered; sequence NNVLPEPSKPNNPVVNPPVSPIQPKTDPEQ. The segment covering 77 to 91 has biased composition (pro residues); it reads PSKPNNPVVNPPVSP.

This is an uncharacterized protein from Caenorhabditis elegans.